The primary structure comprises 193 residues: MTLGIDEAGRGCLVGSLFVAGVVCGEKIALDFLKMGLKDSKKLSQNKRFFLEDKIKSHDEVKFCVIKKSAGEIDSLSLGVCLKLAVQEILEKLSPLAQTINIDGNTAFGLNKRYSNLKTIIKGDEKIAQIAMASVLAKTSKDREMLELHALFKEYGWDKNCGYGTKKHIEAIAKLGATPFHRHSFALKNNWFS.

The region spanning 1–193 is the RNase H type-2 domain; it reads MTLGIDEAGR…SFALKNNWFS (193 aa). 3 residues coordinate a divalent metal cation: D6, E7, and D103.

This sequence belongs to the RNase HII family. Mn(2+) is required as a cofactor. It depends on Mg(2+) as a cofactor.

The protein resides in the cytoplasm. The enzyme catalyses Endonucleolytic cleavage to 5'-phosphomonoester.. In terms of biological role, endonuclease that specifically degrades the RNA of RNA-DNA hybrids. This is Ribonuclease HII from Helicobacter acinonychis (strain Sheeba).